Consider the following 212-residue polypeptide: Thymidylate kinase (212 aa).

Residue 10 to 17 (GIDGCGKT) participates in ATP binding.

Belongs to the thymidylate kinase family.

The catalysed reaction is dTMP + ATP = dTDP + ADP. Functionally, phosphorylation of dTMP to form dTDP in both de novo and salvage pathways of dTTP synthesis. In Prochlorococcus marinus (strain AS9601), this protein is Thymidylate kinase.